The sequence spans 77 residues: Large ribosomal subunit protein uL29 (77 aa).

It belongs to the universal ribosomal protein uL29 family.

The sequence is that of Large ribosomal subunit protein uL29 from Mycobacterium avium (strain 104).